The following is a 303-amino-acid chain: Coenzyme PQQ synthesis protein B (303 aa).

The protein belongs to the PqqB family.

It functions in the pathway cofactor biosynthesis; pyrroloquinoline quinone biosynthesis. May be involved in the transport of PQQ or its precursor to the periplasm. The chain is Coenzyme PQQ synthesis protein B from Pseudomonas syringae pv. syringae (strain B728a).